A 77-amino-acid polypeptide reads, in one-letter code: Acyl carrier protein (77 aa).

The Carrier domain maps to 1–77 (MSVEAKVKKI…DAIEYIRKKS (77 aa)). The residue at position 37 (serine 37) is an O-(pantetheine 4'-phosphoryl)serine.

This sequence belongs to the acyl carrier protein (ACP) family. In terms of processing, 4'-phosphopantetheine is transferred from CoA to a specific serine of apo-ACP by AcpS. This modification is essential for activity because fatty acids are bound in thioester linkage to the sulfhydryl of the prosthetic group.

It localises to the cytoplasm. It functions in the pathway lipid metabolism; fatty acid biosynthesis. Functionally, carrier of the growing fatty acid chain in fatty acid biosynthesis. The protein is Acyl carrier protein of Desulforapulum autotrophicum (strain ATCC 43914 / DSM 3382 / VKM B-1955 / HRM2) (Desulfobacterium autotrophicum).